A 427-amino-acid polypeptide reads, in one-letter code: Inward rectifier potassium channel 2 (427 aa).

Residues 1-81 (MGSVRTNRYS…IFTTCVDIRW (81 aa)) lie on the Cytoplasmic side of the membrane. Cys-76 bears the S-nitrosocysteine mark. The chain crosses the membrane as a helical span at residues 82 to 106 (RWMLVIFCLAFVLSWLFFGCVFWLI). Over 107-128 (ALLHGDLDASKEGKACVSEVNS) the chain is Extracellular. Positions 129–140 (FTAAFLFSIETQ) form an intramembrane region, helical; Pore-forming. Residues 141-147 (TTIGYGF) constitute an intramembrane region (pore-forming). Residues 142–147 (TIGYGF) carry the Selectivity filter motif. Topologically, residues 148–156 (RCVTDECPI) are extracellular. A helical transmembrane segment spans residues 157–178 (AVFMVVFQSIVGCIIDAFIIGA). The Cytoplasmic portion of the chain corresponds to 179 to 427 (VMAKMAKPKK…PRPLRRESEI (249 aa)). The polyphosphoinositide (PIP2)-binding stretch occupies residues 181 to 208 (AKMAKPKKRNETLVFSHNAVIAMRDGKL). A disordered region spans residues 384–427 (SKEEDDSENGVPESTSTDTPPDIDLHNQASVPLEPRPLRRESEI). The PDZ-binding motif lies at 425–427 (SEI).

This sequence belongs to the inward rectifier-type potassium channel (TC 1.A.2.1) family. KCNJ2 subfamily. In terms of assembly, homotetramer. Homomultimeric and heteromultimeric association with KCNJ4/Kir2.3. Can form heteromeric channels with Kir2.6/KCNJ18. Associates, via its PDZ-recognition domain, with a complex containing LIN7A, LIN7B, LIN7C, DLG1, CASK and APBA1. In terms of processing, S-nitrosylation increases the open probability and inward rectifying currents.

It is found in the cell membrane. The protein localises to the sarcolemma. It localises to the T-tubule. It carries out the reaction K(+)(in) = K(+)(out). Activated by phosphatidylinositol 4,5 biphosphate (PtdIns(4,5)P2). Inward rectifier potassium channels are characterized by a greater tendency to allow potassium to flow into the cell rather than out of it. Their voltage dependence is regulated by the concentration of extracellular potassium; as external potassium is raised, the voltage range of the channel opening shifts to more positive voltages. The inward rectification is mainly due to the blockage of outward current by internal magnesium. Can be blocked by extracellular barium or cesium. Probably participates in establishing action potential waveform and excitability of neuronal and muscle tissues. In Macaca mulatta (Rhesus macaque), this protein is Inward rectifier potassium channel 2 (KCNJ2).